We begin with the raw amino-acid sequence, 297 residues long: Homoserine kinase (297 aa).

Residue 82-92 (PLTRGLGSSAS) coordinates ATP.

The protein belongs to the GHMP kinase family. Homoserine kinase subfamily.

It is found in the cytoplasm. The enzyme catalyses L-homoserine + ATP = O-phospho-L-homoserine + ADP + H(+). It functions in the pathway amino-acid biosynthesis; L-threonine biosynthesis; L-threonine from L-aspartate: step 4/5. Catalyzes the ATP-dependent phosphorylation of L-homoserine to L-homoserine phosphate. The polypeptide is Homoserine kinase (Bacillus thuringiensis (strain Al Hakam)).